Consider the following 132-residue polypeptide: Interleukin-5 (132 aa).

Residues 1 to 19 (MHLRLTLVALGAAYVCANA) form the signal peptide. N-linked (GlcNAc...) asparagine glycosylation is found at asparagine 74 and asparagine 88.

The protein belongs to the IL-5 family. As to quaternary structure, homodimer; disulfide-linked. Interacts with IL5RA. Interacts with CSF2RB.

It localises to the secreted. In terms of biological role, homodimeric cytokine expressed predominantly by T-lymphocytes and NK cells that plays an important role in the survival, differentiation, and chemotaxis of eosinophils. Also acts on activated and resting B-cells to induce immunoglobulin production, growth, and differentiation. Mechanistically, exerts its biological effects through a receptor composed of IL5RA subunit and the cytokine receptor common subunit beta/CSF2RB. Binding to the receptor leads to activation of various kinases including LYN, SYK and JAK2 and thereby propagates signals through the RAS-MAPK and JAK-STAT5 pathways respectively. This Ovis aries (Sheep) protein is Interleukin-5 (IL5).